The primary structure comprises 821 residues: Bifunctional dethiobiotin synthetase/7,8-diamino-pelargonic acid aminotransferase, mitochondrial (821 aa).

The segment at 28-283 (SPAFAVFGAN…VHVLPPIPED (256 aa)) is dethiobiotin synthetase. 39–44 (GVGKTL) serves as a coordination point for ATP. T43 lines the Mg(2+) pocket. A substrate-binding site is contributed by T72. E194 contributes to the Mg(2+) binding site. 194 to 197 (ETAG) contacts ATP. Residues 316–820 (RLNSMQRKSK…AKVHRRLQKL (505 aa)) form a 7,8-diamino-pelargonic acid aminotransferase region. Position 374–375 (374–375 (WW)) interacts with (8S)-8-amino-7-oxononanoate. Residue 436–437 (GS) participates in pyridoxal 5'-phosphate binding. Position 482 (Y482) interacts with (8S)-8-amino-7-oxononanoate. D626 is a pyridoxal 5'-phosphate binding site. The (8S)-8-amino-7-oxononanoate site is built by K655 and G689. The residue at position 655 (K655) is an N6-(pyridoxal phosphate)lysine. A pyridoxal 5'-phosphate-binding site is contributed by S691. R787 serves as a coordination point for (8S)-8-amino-7-oxononanoate.

The protein in the N-terminal section; belongs to the dethiobiotin synthetase family. In the C-terminal section; belongs to the class-III pyridoxal-phosphate-dependent aminotransferase family. BioA subfamily. It depends on Mg(2+) as a cofactor. Requires pyridoxal 5'-phosphate as cofactor.

It localises to the mitochondrion. The enzyme catalyses (7R,8S)-7,8-diammoniononanoate + CO2 + ATP = (4R,5S)-dethiobiotin + ADP + phosphate + 3 H(+). The catalysed reaction is (8S)-8-amino-7-oxononanoate + S-adenosyl-L-methionine = S-adenosyl-4-methylsulfanyl-2-oxobutanoate + (7R,8S)-7,8-diammoniononanoate. The protein operates within cofactor biosynthesis; biotin biosynthesis; biotin from 7,8-diaminononanoate: step 1/2. It functions in the pathway cofactor biosynthesis; biotin biosynthesis; 7,8-diaminononanoate from 8-amino-7-oxononanoate (SAM route): step 1/1. In terms of biological role, bifunctional enzyme that catalyzes two different reactions involved in the biotin biosynthesis. Functionally, catalyzes a mechanistically unusual reaction, the ATP-dependent insertion of CO2 between the N7 and N8 nitrogen atoms of 7,8-diaminopelargonic acid (DAPA) to form an ureido ring. Catalyzes the transfer of the alpha-amino group from S-adenosyl-L-methionine (SAM) to 7-keto-8-aminopelargonic acid (KAPA) to form 7,8-diaminopelargonic acid (DAPA). It is the only aminotransferase known to utilize SAM as an amino donor. The chain is Bifunctional dethiobiotin synthetase/7,8-diamino-pelargonic acid aminotransferase, mitochondrial (BIO3-BIO1) from Oryza sativa subsp. japonica (Rice).